A 355-amino-acid chain; its full sequence is uncharacterized protein (355 aa).

An N-terminal signal peptide occupies residues 1-27; it reads MESPIRTARRTLPLLIGATCLVLALTG. The N-palmitoyl cysteine moiety is linked to residue C28. The S-diacylglycerol cysteine moiety is linked to residue C28. Positions 33–53 are disordered; it reads GPAQARPTPSASTSPKQAPAL. Positions 39-48 are enriched in polar residues; it reads PTPSASTSPK.

It localises to the cell membrane. This is an uncharacterized protein from Streptomyces coelicolor (strain ATCC BAA-471 / A3(2) / M145).